Consider the following 1367-residue polypeptide: Paired amphipathic helix protein Sin3-like 2 (1367 aa).

The tract at residues 14–44 is disordered; the sequence is QFKRPLGSSRGESYEQSPITGGGSIGEGGIN. Gly residues predominate over residues 33-42; sequence TGGGSIGEGG. PAH domains follow at residues 46 to 116 and 130 to 200; these read QKLT…LPKG and KTVE…LPDS. The segment at 212-322 is disordered; the sequence is SQAQRYDDRG…EAYSGPASHS (111 aa). 2 stretches are compositionally biased toward basic and acidic residues: residues 230-286 and 299-311; these read MFME…SRDL and FSEK…RMEG. One can recognise a PAH 3 domain in the interval 327 to 396; it reads LKSMYNQAFL…DEFNQFFERC (70 aa). Disordered stretches follow at residues 417-446, 786-883, 912-946, and 958-1031; these read EENL…KERS, DVHA…LSKP, QSDT…DSED, and ATAK…EGME. Basic and acidic residues-rich tracts occupy residues 424 to 446 and 806 to 819; these read VKGE…KERS and SSGK…DLAN. Composition is skewed to polar residues over residues 851 to 876 and 912 to 923; these read ATSS…SSGS and QSDTSKANSNYD. Over residues 958 to 967 the composition is skewed to basic and acidic residues; the sequence is ATAKTEHSVE. Acidic residues-rich tracts occupy residues 968–989 and 997–1016; these read AEGE…EAGE and IGDE…EHDE. Serine 1023 is subject to Phosphoserine.

It is found in the nucleus. Its function is as follows. Acts as a transcriptional repressor. Plays roles in regulating gene expression and genome stability. This Arabidopsis thaliana (Mouse-ear cress) protein is Paired amphipathic helix protein Sin3-like 2 (SNL2).